An 859-amino-acid polypeptide reads, in one-letter code: Rab effector MyRIP (859 aa).

Residues 4–124 (KLDLSGLTDD…AQSLEWFYNN (121 aa)) enclose the RabBD domain. The FYVE-type zinc finger occupies 63–105 (CCMRCCSPFTFLVNTKRQCGDCKFNVCKSCCSYQKHEKAWVCC). Residues 143-560 (RKHRLESGAC…LDTHQVSDDL (418 aa)) are myosin-binding. The interval 193 to 209 (VALRVAEEAIEEAISKA) is PKA-binding. The segment at 232-248 (LTEELATTILQKIIRKQ) is negative regulation of PKA-binding. Positions 251–285 (KSEQQVEEEPGWPHPQSCSTKVADEGTSASPGGYR) are disordered. At Ser298 the chain carries Phosphoserine. 3 disordered regions span residues 302 to 374 (EEAL…KPKS), 386 to 629 (VASA…SQSV), and 783 to 812 (DQKQ…KAEK). Residues 316 to 326 (QPRDQGQHPRA) are compositionally biased toward basic and acidic residues. Ser350 carries the post-translational modification Phosphoserine. The span at 393 to 403 (MGSDSEEDFDW) shows a compositional bias: acidic residues. Residues 435–450 (PIAASPSSALSPNPEA) show a composition bias toward low complexity. Composition is skewed to basic and acidic residues over residues 484–494 (AAEKMRLHGEL) and 607–617 (SEPKTESENQK). Residues 495–856 (DVNFNPQLAS…DLMEPALESA (362 aa)) form an actin-binding region. Composition is skewed to polar residues over residues 618 to 629 (ESLSSEDNSQSV) and 787 to 796 (RTQVQTIDTS).

As to quaternary structure, binds MYO5A, MYO7A and F-actin. Binds RAB27A that has been activated by GTP-binding via its N-terminus. Interacts with PRKAR2A. Interacts with components of the exocyst complex, including EXOC3 and EXOC4. Detected in brain, skin, heart, adrenal medulla, pancreas, intestine, liver, kidney, muscle and testis.

It is found in the cytoplasm. The protein resides in the perinuclear region. It localises to the cytoplasmic vesicle. The protein localises to the secretory vesicle. Functionally, rab effector protein involved in melanosome transport. Serves as link between melanosome-bound RAB27A and the motor proteins MYO5A and MYO7A. May link RAB27A-containing vesicles to actin filaments. Functions as a protein kinase A-anchoring protein (AKAP). May act as a scaffolding protein that links PKA to components of the exocytosis machinery, thus facilitating exocytosis, including insulin release. The polypeptide is Rab effector MyRIP (MYRIP) (Homo sapiens (Human)).